The following is a 192-amino-acid chain: MSKSSDRINLTNQFLIAMPNMADPTFSGTVVYLCDHSERGALGLVINRPTDIDLESLFNRIDLKLEIEPLLHIPVYFGGPVQTERGFVLHEPVEGSSYNSSMTVEGGLEMTTSKDVLEAVATGTGPKRFLLTLGHAGWGAGQLEEEISKNGWLTVAADPRIVFDTPAEERFEAALGLLGVSSSMLSGEAGHA.

Belongs to the UPF0301 (AlgH) family.

The protein is UPF0301 protein BTH_I1462 of Burkholderia thailandensis (strain ATCC 700388 / DSM 13276 / CCUG 48851 / CIP 106301 / E264).